A 681-amino-acid polypeptide reads, in one-letter code: MFSKVSILLFSLASLLLFRSTTGIEFIYNSNFTTTNTLLLGNATVKSPPSILTLTNQTTFSIGRGLYPSRINASSSSASPLPFATSFIFSMAPFKHLSPGHGFAFVFLPFSETSAASSSQHLGLFNFTNNGDPNSRIFAVEFDVFANQEFNDINDNHVGVDVNSLTSVASETAGFYGGRDGQRFTELKLNSGENYQAWIEFNGSAINVTMARASSRKPIRPLISIPLNLTGVLLDDMFVGFTASTGQLVQSHRILSWSFSNSNFSIGDALITRNLPSFKLSGDSVLKSKGFIAGVSSGVVLLVSVIGLLCFYVVRRRRQRLEGDVEDWETEYWPHRVQYKDVLEATKGFSDENMIGYGGNSKVYRGVLEGKEVAVKRIMMSPRESVGATSEFLAEVSSLGRLRHKNIVGLKGWSKKGGESLILIYEYMENGSVDKRIFDCNEMLNWEERMRVIRDLASGMLYLHEGWETKVLHRDIKSSNVLLDKDMNARVGDFGLAKLQNTSKEMVSTTHVVGTAGYMAPELVKTGRASAQTDVYSFGVFVLEVVCGRRPIEEGREGIVEWIWGLMEKDKVVDGLDERIKANGVFVVEEVEMALRIGLLCVHPDPRVRPKMRQVVQILEQGRLVEDGGEREISLLERVKSSYLLETGEGSRQQHPTFQDVWNSSSYSNSFQTYDSILHGR.

A signal peptide spans 1–23 (MFSKVSILLFSLASLLLFRSTTG). A legume-lectin like region spans residues 24–260 (IEFIYNSNFT…SHRILSWSFS (237 aa)). The Extracellular portion of the chain corresponds to 24–290 (IEFIYNSNFT…SGDSVLKSKG (267 aa)). 9 N-linked (GlcNAc...) asparagine glycosylation sites follow: Asn31, Asn42, Asn56, Asn72, Asn126, Asn202, Asn207, Asn228, and Asn263. The helical transmembrane segment at 291–311 (FIAGVSSGVVLLVSVIGLLCF) threads the bilayer. Residues 312–681 (YVVRRRRQRL…QTYDSILHGR (370 aa)) are Cytoplasmic-facing. A Protein kinase domain is found at 349–624 (FSDENMIGYG…VVQILEQGRL (276 aa)). ATP contacts are provided by residues 355–363 (IGYGGNSKV) and Lys376. Asp475 functions as the Proton acceptor in the catalytic mechanism.

This sequence in the C-terminal section; belongs to the protein kinase superfamily. Ser/Thr protein kinase family. It in the N-terminal section; belongs to the leguminous lectin family.

It localises to the cell membrane. The enzyme catalyses L-seryl-[protein] + ATP = O-phospho-L-seryl-[protein] + ADP + H(+). It carries out the reaction L-threonyl-[protein] + ATP = O-phospho-L-threonyl-[protein] + ADP + H(+). The protein is Probable L-type lectin-domain containing receptor kinase VII.2 (LECRK72) of Arabidopsis thaliana (Mouse-ear cress).